The chain runs to 419 residues: MENFTEENLHPWITTTTRVYNNVTIFPQYDDELGKFEIMVLCILCFMALFGNAVVLIVLRIKKTTLTRMQLLIVYLSVTDISVALFHILPTIILKINVYFLGDISACRVYQFITVAELYASSFVLIVTALDRYISICHPLAAHMWTNRRVHMTTALALFLALMCSLPQLDAVLVDFHGGKLCRPNLTTELANIAYSWWAFCSVFFVPLLLLIFFYGRICFVVWQSMRGRECTQSVGSSASRYVRKPIKCRISSQTSSENRVKNYSDARDKDSSRNPRAICRGVSKSKIKTIKLTFSVVACFIICYTPFFTVLMARTYDAELSSAQTPALVILSLLPSLNSCTNPWIYLAFSGKVWCRQQSQNFPRTWTQTTNTYLVELEAKKRTSFGAEHVTFASNSTARKTLNVDDTNTTALMSSSPC.

Topologically, residues 1–37 are extracellular; sequence MENFTEENLHPWITTTTRVYNNVTIFPQYDDELGKFE. N3 and N22 each carry an N-linked (GlcNAc...) asparagine glycan. Residues 38 to 58 form a helical membrane-spanning segment; the sequence is IMVLCILCFMALFGNAVVLIV. Topologically, residues 59 to 80 are cytoplasmic; sequence LRIKKTTLTRMQLLIVYLSVTD. Residues 81–101 traverse the membrane as a helical segment; that stretch reads ISVALFHILPTIILKINVYFL. Topologically, residues 102–108 are extracellular; that stretch reads GDISACR. A disulfide bridge connects residues C107 and C182. Residues 109 to 129 form a helical membrane-spanning segment; it reads VYQFITVAELYASSFVLIVTA. Over 130-153 the chain is Cytoplasmic; the sequence is LDRYISICHPLAAHMWTNRRVHMT. A helical transmembrane segment spans residues 154–174; sequence TALALFLALMCSLPQLDAVLV. Topologically, residues 175–192 are extracellular; sequence DFHGGKLCRPNLTTELAN. The N-linked (GlcNAc...) asparagine glycan is linked to N185. The chain crosses the membrane as a helical span at residues 193–213; that stretch reads IAYSWWAFCSVFFVPLLLLIF. Residues 214 to 292 lie on the Cytoplasmic side of the membrane; it reads FYGRICFVVW…VSKSKIKTIK (79 aa). The interval 253 to 274 is disordered; the sequence is SQTSSENRVKNYSDARDKDSSR. Residues 259–274 show a composition bias toward basic and acidic residues; sequence NRVKNYSDARDKDSSR. A helical transmembrane segment spans residues 293–313; it reads LTFSVVACFIICYTPFFTVLM. Topologically, residues 314-329 are extracellular; that stretch reads ARTYDAELSSAQTPAL. The helical transmembrane segment at 330–350 threads the bilayer; that stretch reads VILSLLPSLNSCTNPWIYLAF. Topologically, residues 351 to 419 are cytoplasmic; it reads SGKVWCRQQS…TTALMSSSPC (69 aa).

This sequence belongs to the G-protein coupled receptor 1 family. Vasopressin/oxytocin receptor subfamily. Present in the nervous system and peripheral tissues.

It is found in the cell membrane. In terms of biological role, acts as a receptor for octopressin. The polypeptide is Octopressin receptor (Octopus vulgaris (Common octopus)).